A 469-amino-acid polypeptide reads, in one-letter code: Crinkler effector protein 1 (469 aa).

A signal peptide spans 1-17 (MSITLLCLIKGNTLANA). Positions 18–57 (FPVDIDKDQLVGHLKKVIKAEQPQTFANVDAKDLKLWRVP) are LQLFLAK-like domain. The DWL domain stretch occupies residues 58–96 (ISDDHDDQLRNLSLEDSDELLAIRKISKYFPDSPPEECI). Residue Asn68 is glycosylated (N-linked (GlcNAc...) asparagine). The short motif at 97 to 103 (HVLVEPP) is the HVLVXXP motif element. N-linked (GlcNAc...) asparagine glycosylation is found at Asn126, Asn181, and Asn248.

Belongs to the Crinkler effector family. In terms of assembly, homodimer.

Its subcellular location is the secreted. It is found in the host nucleus. In terms of biological role, effector that participates in the arbuscule development step of the symbiosis. Arbuscular mycorrhizal (AM) symbiosis is one of the most prominent and beneficial plant-microbe interactions that facilitates mineral nutrition and confers tolerance to biotic and abiotic stresses. Is not involved in cell death processes. The sequence is that of Crinkler effector protein 1 from Rhizophagus irregularis (strain DAOM 181602 / DAOM 197198 / MUCL 43194) (Arbuscular mycorrhizal fungus).